Consider the following 177-residue polypeptide: Large ribosomal subunit protein uL6 (177 aa).

Belongs to the universal ribosomal protein uL6 family. In terms of assembly, part of the 50S ribosomal subunit.

In terms of biological role, this protein binds to the 23S rRNA, and is important in its secondary structure. It is located near the subunit interface in the base of the L7/L12 stalk, and near the tRNA binding site of the peptidyltransferase center. The protein is Large ribosomal subunit protein uL6 of Thioalkalivibrio sulfidiphilus (strain HL-EbGR7).